Consider the following 126-residue polypeptide: Topoisomerase I damage affected protein 8 (126 aa).

Positions 1-110 (MTGYFLPPQT…VTTVSDDFAG (110 aa)) constitute a PA14 domain.

This sequence belongs to the flocculin family.

This Saccharomyces cerevisiae (strain ATCC 204508 / S288c) (Baker's yeast) protein is Topoisomerase I damage affected protein 8 (TDA8).